The following is a 191-amino-acid chain: uncharacterized protein (191 aa).

Disordered stretches follow at residues 1–42 (MSEE…DADA) and 145–191 (QNQE…IDLD). Composition is skewed to basic and acidic residues over residues 11-26 (PRPD…RATG) and 147-178 (QERR…RDEG).

In terms of assembly, it may form a heterotetramer of two glucokinase subunits (glk) with two ORF2 proteins.

Its function is as follows. May be involved in glucose transport or metabolism. This is an uncharacterized protein from Streptomyces coelicolor (strain ATCC BAA-471 / A3(2) / M145).